A 320-amino-acid polypeptide reads, in one-letter code: ATP-dependent 6-phosphofructokinase (320 aa).

Gly-12 serves as a coordination point for ATP. ADP-binding positions include 22 to 26 (RGVVR) and 55 to 60 (RYSVSD). Residues 73–74 (RF) and 103–106 (GDGS) each bind ATP. Asp-104 lines the Mg(2+) pocket. 126-128 (TID) contributes to the substrate binding site. Asp-128 acts as the Proton acceptor in catalysis. Position 155 (Arg-155) interacts with ADP. Residues Arg-163 and 170–172 (MGR) each bind substrate. ADP is bound by residues 186–188 (GCE), Lys-212, and 214–216 (KKH). Substrate contacts are provided by residues Glu-223, Arg-244, and 250-253 (HIQR).

The protein belongs to the phosphofructokinase type A (PFKA) family. ATP-dependent PFK group I subfamily. Prokaryotic clade 'B1' sub-subfamily. In terms of assembly, homotetramer. Requires Mg(2+) as cofactor.

The protein resides in the cytoplasm. It catalyses the reaction beta-D-fructose 6-phosphate + ATP = beta-D-fructose 1,6-bisphosphate + ADP + H(+). It participates in carbohydrate degradation; glycolysis; D-glyceraldehyde 3-phosphate and glycerone phosphate from D-glucose: step 3/4. Its activity is regulated as follows. Allosterically activated by ADP and other diphosphonucleosides, and allosterically inhibited by phosphoenolpyruvate. Catalyzes the phosphorylation of D-fructose 6-phosphate to fructose 1,6-bisphosphate by ATP, the first committing step of glycolysis. The protein is ATP-dependent 6-phosphofructokinase of Escherichia fergusonii (strain ATCC 35469 / DSM 13698 / CCUG 18766 / IAM 14443 / JCM 21226 / LMG 7866 / NBRC 102419 / NCTC 12128 / CDC 0568-73).